The chain runs to 249 residues: Undecaprenyl-diphosphatase (249 aa).

8 helical membrane-spanning segments follow: residues 11-31, 35-55, 80-100, 101-121, 135-155, 175-195, 202-222, and 226-246; these read GLTE…TAIF, PDVG…LIFV, LVLS…FIES, VFSS…LMLL, IPYL…LPGI, AVKY…ILEL, AEQL…LYLV, and VIGG…FFVL.

Belongs to the UppP family.

It is found in the cell membrane. The catalysed reaction is di-trans,octa-cis-undecaprenyl diphosphate + H2O = di-trans,octa-cis-undecaprenyl phosphate + phosphate + H(+). Its function is as follows. Catalyzes the dephosphorylation of undecaprenyl diphosphate (UPP). The protein is Undecaprenyl-diphosphatase of Methanococcus maripaludis (strain C5 / ATCC BAA-1333).